The primary structure comprises 370 residues: 3-dehydroquinate synthase (370 aa).

NAD(+) contacts are provided by residues glycine 108–aspartate 112, threonine 132–threonine 133, lysine 145, and lysine 154. Positions 187, 249, and 267 each coordinate Zn(2+).

The protein belongs to the sugar phosphate cyclases superfamily. Dehydroquinate synthase family. It depends on Co(2+) as a cofactor. Zn(2+) serves as cofactor. The cofactor is NAD(+).

Its subcellular location is the cytoplasm. It carries out the reaction 7-phospho-2-dehydro-3-deoxy-D-arabino-heptonate = 3-dehydroquinate + phosphate. It participates in metabolic intermediate biosynthesis; chorismate biosynthesis; chorismate from D-erythrose 4-phosphate and phosphoenolpyruvate: step 2/7. Functionally, catalyzes the conversion of 3-deoxy-D-arabino-heptulosonate 7-phosphate (DAHP) to dehydroquinate (DHQ). The chain is 3-dehydroquinate synthase from Cereibacter sphaeroides (strain ATCC 17023 / DSM 158 / JCM 6121 / CCUG 31486 / LMG 2827 / NBRC 12203 / NCIMB 8253 / ATH 2.4.1.) (Rhodobacter sphaeroides).